Reading from the N-terminus, the 329-residue chain is Ketol-acid reductoisomerase (NADP(+)) (329 aa).

Positions 2–182 constitute a KARI N-terminal Rossmann domain; that stretch reads TQLFYDTDAD…GGTRAGILET (181 aa). NADP(+) contacts are provided by residues 25–28, Ser-51, Ser-53, and 83–86; these read YGSQ and DEFQ. His-108 is a catalytic residue. Gly-134 contributes to the NADP(+) binding site. Residues 183–328 enclose the KARI C-terminal knotted domain; it reads NFKEETETDL…KGLRSMFSWL (146 aa). Residues Asp-191, Glu-195, Glu-227, and Glu-231 each coordinate Mg(2+). Ser-252 is a substrate binding site.

Belongs to the ketol-acid reductoisomerase family. Requires Mg(2+) as cofactor.

The catalysed reaction is (2R)-2,3-dihydroxy-3-methylbutanoate + NADP(+) = (2S)-2-acetolactate + NADPH + H(+). It catalyses the reaction (2R,3R)-2,3-dihydroxy-3-methylpentanoate + NADP(+) = (S)-2-ethyl-2-hydroxy-3-oxobutanoate + NADPH + H(+). The protein operates within amino-acid biosynthesis; L-isoleucine biosynthesis; L-isoleucine from 2-oxobutanoate: step 2/4. Its pathway is amino-acid biosynthesis; L-valine biosynthesis; L-valine from pyruvate: step 2/4. Involved in the biosynthesis of branched-chain amino acids (BCAA). Catalyzes an alkyl-migration followed by a ketol-acid reduction of (S)-2-acetolactate (S2AL) to yield (R)-2,3-dihydroxy-isovalerate. In the isomerase reaction, S2AL is rearranged via a Mg-dependent methyl migration to produce 3-hydroxy-3-methyl-2-ketobutyrate (HMKB). In the reductase reaction, this 2-ketoacid undergoes a metal-dependent reduction by NADPH to yield (R)-2,3-dihydroxy-isovalerate. In Prochlorococcus marinus (strain AS9601), this protein is Ketol-acid reductoisomerase (NADP(+)).